We begin with the raw amino-acid sequence, 394 residues long: Lipoyl synthase, chloroplastic (394 aa).

The transit peptide at 1–36 (MMHHCSITKPTFSISISTQKLHHHSSKFLNLGFRIR) directs the protein to the chloroplast. Positions 127, 132, 138, 158, 162, 165, and 373 each coordinate [4Fe-4S] cluster. One can recognise a Radical SAM core domain in the interval 141–362 (GGGDGVATAT…KTYGESIGFR (222 aa)).

Belongs to the radical SAM superfamily. Lipoyl synthase family. It depends on [4Fe-4S] cluster as a cofactor. In terms of tissue distribution, expressed in roots, leaves and flowers.

The protein localises to the plastid. It is found in the chloroplast. The enzyme catalyses [[Fe-S] cluster scaffold protein carrying a second [4Fe-4S](2+) cluster] + N(6)-octanoyl-L-lysyl-[protein] + 2 oxidized [2Fe-2S]-[ferredoxin] + 2 S-adenosyl-L-methionine + 4 H(+) = [[Fe-S] cluster scaffold protein] + N(6)-[(R)-dihydrolipoyl]-L-lysyl-[protein] + 4 Fe(3+) + 2 hydrogen sulfide + 2 5'-deoxyadenosine + 2 L-methionine + 2 reduced [2Fe-2S]-[ferredoxin]. The protein operates within protein modification; protein lipoylation via endogenous pathway; protein N(6)-(lipoyl)lysine from octanoyl-[acyl-carrier-protein]: step 2/2. In terms of biological role, catalyzes the radical-mediated insertion of two sulfur atoms into the C-6 and C-8 positions of the octanoyl moiety bound to the lipoyl domains of lipoate-dependent enzymes, thereby converting the octanoylated domains into lipoylated derivatives. Together with LIP2P and LIP2P2 is essential for de novo plastidial protein lipoylation during seed development. In Arabidopsis thaliana (Mouse-ear cress), this protein is Lipoyl synthase, chloroplastic.